A 158-amino-acid chain; its full sequence is Transcription factor BTF3 homolog 4 (158 aa).

Residue Lys5 is modified to N6-methyllysine. In terms of domain architecture, NAC-A/B spans 33 to 98 (TADDKKLQSS…AEAKPITEML (66 aa)). Thr111 carries the phosphothreonine modification. Residues 122-158 (RQVLDSKAPKPEDIDEEDDDVPDLVENFDEASKNEAN) are disordered. Residues 134–150 (DIDEEDDDVPDLVENFD) are compositionally biased toward acidic residues.

This sequence belongs to the NAC-beta family.

This is Transcription factor BTF3 homolog 4 (BTF3L4) from Homo sapiens (Human).